We begin with the raw amino-acid sequence, 60 residues long: Temporin-CG2 (60 aa).

The signal sequence occupies residues 1-22 (MFTLKKPLLVLFFLATINLSLC). Positions 23–43 (EQERNAEEERRDDDERNVEVE) are cleaved as a propeptide — removed in mature form.

Expressed by the skin glands.

It is found in the secreted. Antimicrobial peptide active against a variety of Gram-positive bacterial strains but not against Gram-negative bacteria. Has weak antifungal activity against a slime mold isolate. Has weak hemolytic activity against human erythrocytes. The polypeptide is Temporin-CG2 (Amolops chunganensis (Chungan torrent frog)).